We begin with the raw amino-acid sequence, 213 residues long: Mite allergen Der f 7 (213 aa).

The first 17 residues, 1–17 (MMKFLLIAAVAFVAVSA), serve as a signal peptide directing secretion. Residue Asn151 is glycosylated (N-linked (GlcNAc...) asparagine).

It belongs to the mite group 7 allergen family.

The protein resides in the secreted. The protein is Mite allergen Der f 7 (DERF7) of Dermatophagoides farinae (American house dust mite).